The primary structure comprises 5005 residues: Bridge-like lipid transfer protein family member 1 (5005 aa).

A helical transmembrane segment spans residues 26–46 (NVVWLLVATILSCGWIIYLTY). Disordered regions lie at residues 691-721 (LRPS…LPPD), 1218-1257 (LSLQ…SSVA), and 1269-1310 (GTKR…LKRQ). 2 stretches are compositionally biased toward low complexity: residues 700–711 (RVVSSPSTSSRP) and 1226–1240 (SHSS…SSSS). Residues 1248-1257 (GEKESPSSVA) are compositionally biased toward basic and acidic residues. The span at 1278–1303 (SIPTEISGNSPVSPNTQDKSVGQSPL) shows a compositional bias: polar residues. Phosphoserine is present on residues S1301, S1305, and S1323. T1325 is modified (phosphothreonine). 4 disordered regions span residues 1343-1376 (SDVS…SNSF), 1400-1427 (EFEP…QQID), 1521-1548 (TNKR…SSSF), and 1676-1704 (FSEN…QGQA). Phosphoserine occurs at positions 1355 and 1406. Basic residues predominate over residues 1521–1530 (TNKRTSKSSL). The span at 1691–1704 (TEQSTIGTTNQGQA) shows a compositional bias: polar residues. 2 positions are modified to phosphoserine: S1805 and S1808. Disordered stretches follow at residues 1924–1991 (DTER…PLMP), 2401–2420 (SDQN…QDDV), and 2598–2677 (TAGS…KDVV). 4 stretches are compositionally biased toward polar residues: residues 1931-1948 (LTSN…YNTD), 1959-1971 (TSPS…NSVS), 2401-2418 (SDQN…TSQD), and 2598-2608 (TAGSASPTPTF). Phosphoserine occurs at positions 2601 and 2603. Positions 2619–2638 (SDFSRSSRGSLNGGNRVNNA) are enriched in low complexity. The span at 2643–2665 (TNNENNKKESRNKNSLGRSERRT) shows a compositional bias: basic and acidic residues. Phosphoserine is present on S2755. Residues 2928–2967 (RQPSTAPQPVKEDIATPLPSEKTPTSVNQTPVETNEFPQL) are disordered. The span at 2949 to 2964 (KTPTSVNQTPVETNEF) shows a compositional bias: polar residues. Position 3562 is a phosphoserine (S3562). The segment covering 3612-3622 (PSYSRSKSISA) has biased composition (polar residues). 6 disordered regions span residues 3612–3661 (PSYS…VTFN), 3686–3744 (SSNS…ERFY), 3821–3843 (RRSY…KKFQ), 3914–3954 (YGMK…KGKG), 4088–4146 (GTTY…SSSS), and 4325–4394 (QSAS…KAAS). S3653 is subject to Phosphoserine. Residues 3686–3700 (SSNSEGSCSVFSSPK) are compositionally biased toward polar residues. Residues 3727 to 3736 (EDSEKDEKDE) show a composition bias toward acidic residues. The segment covering 3821–3837 (RRSYDRSSRSLDQDSPS) has biased composition (basic and acidic residues). 2 stretches are compositionally biased toward polar residues: residues 3931-3940 (TVQSKTNTLL) and 4098-4113 (PGGN…SASK). Positions 4122–4146 (LGSPLGRSRHSSSQSDLTSSSSSSS) are enriched in low complexity. A Phosphoserine modification is found at S4124. Residues 4325–4358 (QSASFTHMPQSPNVFNEHMTNSTMSPGTVGQSLK) are compositionally biased toward polar residues. Positions 4359–4372 (SPASIRSRSVSDSS) are enriched in low complexity. Polar residues predominate over residues 4381 to 4394 (KTSTPFNKSNKAAS).

Highly expressed in testis and ovary. Weakly or not expressed in other tissues.

The protein localises to the cell membrane. Its subcellular location is the endoplasmic reticulum membrane. It is found in the mitochondrion membrane. Tube-forming lipid transport protein which provides phosphatidylethanolamine for glycosylphosphatidylinositol (GPI) anchor synthesis in the endoplasmic reticulum. Plays a role in endosomal trafficking and endosome recycling. Also involved in the actin cytoskeleton and cilia structural dynamics. Acts as a regulator of phagocytosis. The sequence is that of Bridge-like lipid transfer protein family member 1 from Homo sapiens (Human).